Consider the following 214-residue polypeptide: Germin-like protein 9-3 (214 aa).

A signal peptide spans 1–23 (MASSILLLVVLAVVSAPVALVMA). Asn42, Asn60, and Asn69 each carry an N-linked (GlcNAc...) asparagine glycan. The 144-residue stretch at 59 to 202 (MNMSMPMPNA…SFKTDVPTIQ (144 aa)) folds into the Cupin type-1 domain. The Mn(2+) site is built by His104, His106, Glu111, and His150.

It belongs to the germin family. As to quaternary structure, oligomer (believed to be a pentamer but probably hexamer).

It is found in the secreted. Its subcellular location is the extracellular space. The protein localises to the apoplast. Its function is as follows. May play a role in plant defense. Probably has no oxalate oxidase activity even if the active site is conserved. This Oryza sativa subsp. japonica (Rice) protein is Germin-like protein 9-3.